A 394-amino-acid chain; its full sequence is Cell division protein FtsZ (394 aa).

Residues 21–25 (GGGGN), 108–110 (GTG), glutamate 139, arginine 143, and aspartate 187 each bind GTP.

It belongs to the FtsZ family. In terms of assembly, homodimer. Polymerizes to form a dynamic ring structure in a strictly GTP-dependent manner. Interacts directly with several other division proteins. Interacts with the SulA inhibitor.

It localises to the cytoplasm. In terms of biological role, essential cell division protein that forms a contractile ring structure (Z ring) at the future cell division site. The regulation of the ring assembly controls the timing and the location of cell division. One of the functions of the FtsZ ring is to recruit other cell division proteins to the septum to produce a new cell wall between the dividing cells. Binds GTP and shows GTPase activity. This Pseudomonas aeruginosa (strain ATCC 15692 / DSM 22644 / CIP 104116 / JCM 14847 / LMG 12228 / 1C / PRS 101 / PAO1) protein is Cell division protein FtsZ.